The sequence spans 130 residues: Small ribosomal subunit protein uS9 (130 aa).

The interval 98–130 (LKKAGMLTRDPRMKERKKYGLKKARKASQFSKR) is disordered. A compositionally biased stretch (basic residues) spans 111–130 (KERKKYGLKKARKASQFSKR).

This sequence belongs to the universal ribosomal protein uS9 family.

The protein is Small ribosomal subunit protein uS9 of Lacticaseibacillus casei (strain BL23) (Lactobacillus casei).